Reading from the N-terminus, the 167-residue chain is Phospholipase A and acyltransferase 1 (167 aa).

Topologically, residues 1–138 (MAVNDCFSLT…GEGVSEQANR (138 aa)) are cytoplasmic. The LRAT domain occupies 20 to 135 (LIEVFRPCYQ…LRYGEGVSEQ (116 aa)). H30 is an active-site residue. The active-site Acyl-thioester intermediate is the C119. A helical membrane pass occupies residues 139-159 (AIGTIGLVAAGIDIFTFLGLF). The Lumenal segment spans residues 160–167 (PKRQGAKS).

Belongs to the H-rev107 family.

It is found in the membrane. Its subcellular location is the cytoplasm. It localises to the nucleus. The catalysed reaction is a 1,2-diacyl-sn-glycero-3-phosphocholine + H2O = a 1-acyl-sn-glycero-3-phosphocholine + a fatty acid + H(+). The enzyme catalyses a 1,2-diacyl-sn-glycero-3-phosphocholine + H2O = a 2-acyl-sn-glycero-3-phosphocholine + a fatty acid + H(+). It carries out the reaction 1,2-dihexadecanoyl-sn-glycero-3-phosphocholine + H2O = 2-hexadecanoyl-sn-glycero-3-phosphocholine + hexadecanoate + H(+). It catalyses the reaction 1,2-dihexadecanoyl-sn-glycero-3-phosphocholine + H2O = 1-hexadecanoyl-sn-glycero-3-phosphocholine + hexadecanoate + H(+). The catalysed reaction is 1-hexadecanoyl-2-(5Z,8Z,11Z,14Z-eicosatetraenoyl)-sn-glycero-3-phosphoethanolamine + H2O = 2-(5Z,8Z,11Z,14Z)-eicosatetraenoyl-sn-glycero-3-phosphoethanolamine + hexadecanoate + H(+). The enzyme catalyses 1-hexadecanoyl-2-(5Z,8Z,11Z,14Z-eicosatetraenoyl)-sn-glycero-3-phosphoethanolamine + H2O = 1-hexadecanoyl-sn-glycero-3-phosphoethanolamine + (5Z,8Z,11Z,14Z)-eicosatetraenoate + H(+). It carries out the reaction 1,2-di-(9Z-octadecenoyl)-sn-glycero-3-phosphoethanolamine + 1,2-dihexadecanoyl-sn-glycero-3-phosphocholine = hexadecanoyl-sn-glycero-3-phosphocholine + N-hexadecanoyl-1,2-di-(9Z-octadecenoyl)-sn-glycero-3-phosphoethanolamine + H(+). It catalyses the reaction 1,2-dihexadecanoyl-sn-glycero-3-phosphocholine + a 2-acyl-sn-glycero-3-phosphocholine = a 1-hexadecanoyl-2-acyl-sn-glycero-3-phosphocholine + 2-hexadecanoyl-sn-glycero-3-phosphocholine. In terms of biological role, exhibits both phospholipase A1/2 and acyltransferase activities. Shows phospholipase A1 (PLA1) and A2 (PLA2) activity, catalyzing the calcium-independent release of fatty acids from the sn-1 or sn-2 position of glycerophospholipids. Shows O-acyltransferase activity, catalyzing the transfer of a fatty acyl group from glycerophospholipid to the hydroxyl group of lysophospholipid. This chain is Phospholipase A and acyltransferase 1, found in Rattus norvegicus (Rat).